We begin with the raw amino-acid sequence, 242 residues long: Transcription factor Spi-C (242 aa).

Positions Leu112–Ser195 form a DNA-binding region, ETS.

Belongs to the ETS family. As to quaternary structure, binds DNA as a monomer. As to expression, expressed in lymphoid tissues, including spleen, bone marrow and thymus. According to PubMed:19037245, highly expressed in red pulp macrophages and, at lower, levels in B-cells, but not in other cells, including, monocytes, dendritic cells and other tissue macrophages. According to PubMed:10464163 expressed in pre- and mature B-cells but not in immature B-cells; according to PubMed:10187812 not expressed in pre- but predominantly in mature B-cells and at lower levels in macrophages.

Its subcellular location is the nucleus. Functionally, controls the development of red pulp macrophages required for red blood cells recycling and iron homeostasis. Transcription factor that binds to the PU-box, a purine-rich DNA sequence (5'-GAGGA[AT]-3') that can act as a lymphoid-specific enhancer. Regulates VCAM1 gene expression. This Mus musculus (Mouse) protein is Transcription factor Spi-C (Spic).